Here is a 236-residue protein sequence, read N- to C-terminus: Large ribosomal subunit protein uL2 (236 aa).

Positions Met1–Arg10 are enriched in polar residues. 2 disordered regions span residues Met1–Pro20 and Gly202–Arg236. Basic residues predominate over residues Lys224–Arg236.

This sequence belongs to the universal ribosomal protein uL2 family. Part of the 50S ribosomal subunit. Forms a bridge to the 30S subunit in the 70S ribosome.

Functionally, one of the primary rRNA binding proteins. Required for association of the 30S and 50S subunits to form the 70S ribosome, for tRNA binding and peptide bond formation. It has been suggested to have peptidyltransferase activity; this is somewhat controversial. Makes several contacts with the 16S rRNA in the 70S ribosome. The chain is Large ribosomal subunit protein uL2 from Methanospirillum hungatei JF-1 (strain ATCC 27890 / DSM 864 / NBRC 100397 / JF-1).